Here is a 210-residue protein sequence, read N- to C-terminus: Mitochondrial cardiolipin hydrolase (210 aa).

The Mitochondrial intermembrane segment spans residues 1-5; that stretch reads MLLWG. Residues 6 to 24 form a helical membrane-spanning segment; sequence RWKLAAGLAGLALSLELFY. Residues 25–210 are Cytoplasmic-facing; the sequence is RYMRRRKPLR…YNFFPEKENK (186 aa). Positions 138 to 165 constitute a PLD phosphodiesterase domain; it reads SSGYMHHKFAVVDGTVVLTGSLNWTVQA. Residues H143, K145, and D150 contribute to the active site.

Belongs to the phospholipase D family. MitoPLD/Zucchini subfamily. As to quaternary structure, homodimer.

The protein localises to the mitochondrion outer membrane. The enzyme catalyses a cardiolipin + H2O = a 1,2-diacyl-sn-glycero-3-phospho-(1'-sn-glycerol) + a 1,2-diacyl-sn-glycero-3-phosphate + H(+). In terms of biological role, presents phospholipase and nuclease activities, depending on the different physiological conditions. Plays a key role in mitochondrial fusion and fission via its phospholipase activity. In its phospholipase role, it uses the mitochondrial lipid cardiolipin as substrate to generate phosphatidate (PA or 1,2-diacyl-sn-glycero-3-phosphate), a second messenger signaling lipid. Production of PA facilitates Mitofusin-mediated fusion, whereas the cleavage of PA by the Lipin family of phosphatases produces diacylgycerol (DAG) which promotes mitochondrial fission. Regulates mitochondrial shape through facilitating mitochondrial fusion. During spermatogenesis, plays a critical role in PIWI-interacting RNA (piRNA) biogenesis. piRNAs provide essential protection against the activity of mobile genetic elements. piRNA-mediated transposon silencing is thus critical for maintaining genome stability, in particular in germline cells when transposons are mobilized as a consequence of wide-spread genomic demethylation. Has been shown to be a backbone-non-specific, single strand-specific nuclease, cleaving either RNA or DNA substrates with similar affinity. Produces 5' phosphate and 3' hydroxyl termini, suggesting it could directly participate in the processing of primary piRNA transcripts. Has been proposed to act as a cardiolipin hydrolase to generate phosphatidic acid at mitochondrial surface. Although it cannot be excluded that it can act as a phospholipase in some circumstances, this activity could not be confirmed. This Xenopus laevis (African clawed frog) protein is Mitochondrial cardiolipin hydrolase (pld6).